We begin with the raw amino-acid sequence, 949 residues long: AP-1 complex subunit beta-1 (949 aa).

Lysine 318 carries the post-translational modification N6-acetyllysine. 3'-nitrotyrosine is present on tyrosine 574. Positions 592–623 (SLPPRTASSESTESPEAAPAGAPASDQPDVIP) are disordered. The span at 594-616 (PPRTASSESTESPEAAPAGAPAS) shows a compositional bias: low complexity.

The protein belongs to the adaptor complexes large subunit family. As to quaternary structure, adaptor protein complex 1 (AP-1) is a heterotetramer composed of two large adaptins (gamma-type subunit AP1G1 and beta-type subunit AP1B1), a medium adaptin (mu-type subunit AP1M1 or AP1M2) and a small adaptin (sigma-type subunit AP1S1 or AP1S2 or AP1S3). Post-translationally, the N-terminus is blocked.

Its subcellular location is the golgi apparatus. It localises to the cytoplasmic vesicle. The protein resides in the clathrin-coated vesicle membrane. In terms of biological role, subunit of clathrin-associated adaptor protein complex 1 that plays a role in protein sorting in the late-Golgi/trans-Golgi network (TGN) and/or endosomes. The AP complexes mediate both the recruitment of clathrin to membranes and the recognition of sorting signals within the cytosolic tails of transmembrane cargo molecules. The chain is AP-1 complex subunit beta-1 (Ap1b1) from Rattus norvegicus (Rat).